We begin with the raw amino-acid sequence, 334 residues long: Glyceraldehyde-3-phosphate dehydrogenase (334 aa).

Residues 12–13 (TI) and G111 each bind NAD(+). 140 to 142 (SCN) contacts D-glyceraldehyde 3-phosphate. C141 serves as the catalytic Nucleophile. R167 contacts NAD(+). 192–193 (HG) serves as a coordination point for D-glyceraldehyde 3-phosphate. NAD(+) is bound at residue Q298.

This sequence belongs to the glyceraldehyde-3-phosphate dehydrogenase family. In terms of assembly, homotetramer.

The protein resides in the cytoplasm. It carries out the reaction D-glyceraldehyde 3-phosphate + phosphate + NADP(+) = (2R)-3-phospho-glyceroyl phosphate + NADPH + H(+). It catalyses the reaction D-glyceraldehyde 3-phosphate + phosphate + NAD(+) = (2R)-3-phospho-glyceroyl phosphate + NADH + H(+). It participates in carbohydrate degradation; glycolysis; pyruvate from D-glyceraldehyde 3-phosphate: step 1/5. This Thermococcus onnurineus (strain NA1) protein is Glyceraldehyde-3-phosphate dehydrogenase.